Here is a 185-residue protein sequence, read N- to C-terminus: HTH-type transcriptional regulator Hpr (185 aa).

In terms of domain architecture, HTH marR-type spans 13–157; that stretch reads AMIFSQRIAQ…LIAILRNIYG (145 aa). Residues 63 to 86 constitute a DNA-binding region (H-T-H motif); that stretch reads ISEIAKFGVMHVSTAFNFSKKLEE.

As to quaternary structure, homodimer.

Functionally, negative regulator of protease production and sporulation. The sequence is that of HTH-type transcriptional regulator Hpr from Bacillus mycoides (strain KBAB4) (Bacillus weihenstephanensis).